The primary structure comprises 373 residues: Flagellar P-ring protein (373 aa).

The first 27 residues, 1-27 (MPSFSPTLLKLAAAALSALLLSGVAAS), serve as a signal peptide directing secretion.

Belongs to the FlgI family. In terms of assembly, the basal body constitutes a major portion of the flagellar organelle and consists of four rings (L,P,S, and M) mounted on a central rod.

It is found in the periplasm. It localises to the bacterial flagellum basal body. In terms of biological role, assembles around the rod to form the L-ring and probably protects the motor/basal body from shearing forces during rotation. The polypeptide is Flagellar P-ring protein (Rhodopseudomonas palustris (strain BisB5)).